Consider the following 130-residue polypeptide: MKRHEAREKALQALFQIDVGRIPPDEALHNVTGGGDIDPFLRQLVFGVVEHQEEIDELLRANLEKWTLERVANVDRAILRMATYEMKYADDVPVSVSLDEAVELAKKFGDWKSGSFVNGVLSKVKAALQK.

Belongs to the NusB family.

Its function is as follows. Involved in transcription antitermination. Required for transcription of ribosomal RNA (rRNA) genes. Binds specifically to the boxA antiterminator sequence of the ribosomal RNA (rrn) operons. The protein is Transcription antitermination protein NusB of Geobacillus kaustophilus (strain HTA426).